Reading from the N-terminus, the 280-residue chain is Transcription factor MYB46 (280 aa).

HTH myb-type domains follow at residues 15–67 and 68–122; these read VKKM…INYL and RPDL…KKRL. DNA-binding regions (H-T-H motif) lie at residues 43–67 and 95–118; these read WSDVAKNAGLQRCGKSCRLRWINYL and WSQIAARLPGRTDNEIKNFWNSTI. The interval 129–150 is disordered; the sequence is SNLINNSSSSPNTASDSSSNSA.

In terms of tissue distribution, expressed at low levels in stems and siliques, specifically in xylem.

It localises to the nucleus. Transcription activator. Involved in the regulation of secondary wall biosynthesis in fibers and vessels. Transcription activator of the mannan synthase CSLA9 that recognizes and binds to the DNA consensus sequence 5'-[AG][GT]T[AT]GGT[GA]-3' cis-regulatory element of CSLA9 promoter. Transcription factor that acts as a molecular switch in the NAC012/SND1-mediated transcriptional network regulating secondary wall biosynthesis. Is directly activated by NAC012/SND1. Functions redundantly with MYB83 in the transcriptional regulatory cascade leading to secondary wall formation in fibers and vessels. Transcription activator that binds to the DNA consensus sequence 5'-ACC[AT]A[AC][TC]-3', designated as the secondary wall MYB-responsive element (SMRE). Regulates directly numerous transcription factors and a number of genes involved in secondary wall biosynthesis that contain SMRE elements in their promoters. Is an obligate component of the transcriptional regulatory complex toward the commitment of secondary wall cellulose synthesis. Is required for functional expression of the three secondary wall CESA genes, CESA4, CESA7 and CESA8. This is Transcription factor MYB46 from Arabidopsis thaliana (Mouse-ear cress).